Here is a 254-residue protein sequence, read N- to C-terminus: 5'-nucleotidase SurE (254 aa).

Residues Asp-8, Asp-9, Ser-39, and Asn-91 each contribute to the a divalent metal cation site.

This sequence belongs to the SurE nucleotidase family. The cofactor is a divalent metal cation.

It is found in the cytoplasm. It catalyses the reaction a ribonucleoside 5'-phosphate + H2O = a ribonucleoside + phosphate. Its function is as follows. Nucleotidase that shows phosphatase activity on nucleoside 5'-monophosphates. The sequence is that of 5'-nucleotidase SurE from Methylibium petroleiphilum (strain ATCC BAA-1232 / LMG 22953 / PM1).